We begin with the raw amino-acid sequence, 819 residues long: Ent-beyerene synthase KSL2, chloroplastic (819 aa).

The N-terminal 58 residues, 1–58 (MLPCLFPAYGSVVACKPSAIDRSPFGLLSQPKQTNRTLIRRPKVTKAFMAIEAMRHCS), are a transit peptide targeting the chloroplast. Residues 58 to 76 (SSSSSSEEGGAAATTAARS) are compositionally biased toward low complexity. Positions 58–77 (SSSSSSEEGGAAATTAARSA) are disordered. Positions 567, 571, 711, 715, and 719 each coordinate Mg(2+). Residues 567-571 (DDFFD) carry the DDXXD motif motif.

It belongs to the terpene synthase family. Requires Mg(2+) as cofactor. Expressed in roots. Highly expressed in stems, flowers and panicle.

The protein resides in the plastid. It localises to the chloroplast. It carries out the reaction ent-copalyl diphosphate = ent-beyerene + diphosphate. The enzyme catalyses ent-copalyl diphosphate = ent-kaur-16-ene + diphosphate. Its pathway is secondary metabolite biosynthesis; terpenoid biosynthesis. Diterpene cyclase involved in jasmonic acid-dependent defense mechanisms in roots by mediating the biosynthesis of labdane-related diterpenoids (LRDs) natural products such as ent-beyerene, an antimicrobial compound. Catalyzes the cyclization of ent-CDP into ent-beyerene as a major and ent-kaurene as a minor product. May be involved in the catalysis of an early step of the gibberellin (GA) biosynthesis pathway. The sequence is that of Ent-beyerene synthase KSL2, chloroplastic from Oryza sativa subsp. japonica (Rice).